The primary structure comprises 622 residues: 1-deoxy-D-xylulose-5-phosphate synthase (622 aa).

Thiamine diphosphate contacts are provided by residues H74 and 115-117; that span reads GHS. D146 is a binding site for Mg(2+). Residues 147 to 148, N175, Y286, and E366 each bind thiamine diphosphate; that span reads GA. N175 serves as a coordination point for Mg(2+).

The protein belongs to the transketolase family. DXPS subfamily. Homodimer. Mg(2+) serves as cofactor. Requires thiamine diphosphate as cofactor.

It carries out the reaction D-glyceraldehyde 3-phosphate + pyruvate + H(+) = 1-deoxy-D-xylulose 5-phosphate + CO2. Its pathway is metabolic intermediate biosynthesis; 1-deoxy-D-xylulose 5-phosphate biosynthesis; 1-deoxy-D-xylulose 5-phosphate from D-glyceraldehyde 3-phosphate and pyruvate: step 1/1. Its function is as follows. Catalyzes the acyloin condensation reaction between C atoms 2 and 3 of pyruvate and glyceraldehyde 3-phosphate to yield 1-deoxy-D-xylulose-5-phosphate (DXP). The chain is 1-deoxy-D-xylulose-5-phosphate synthase from Carboxydothermus hydrogenoformans (strain ATCC BAA-161 / DSM 6008 / Z-2901).